A 272-amino-acid chain; its full sequence is HMP-PP phosphatase (272 aa).

Asp8 (nucleophile) is an active-site residue. Residues Asp8, Asp10, and Asp212 each contribute to the Mg(2+) site.

This sequence belongs to the HAD-like hydrolase superfamily. Cof family. Mg(2+) is required as a cofactor.

It catalyses the reaction 4-amino-2-methyl-5-(diphosphooxymethyl)pyrimidine + H2O = 4-amino-2-methyl-5-(phosphooxymethyl)pyrimidine + phosphate + H(+). In terms of biological role, catalyzes the hydrolysis of 4-amino-2-methyl-5-hydroxymethylpyrimidine pyrophosphate (HMP-PP) to 4-amino-2-methyl-5-hydroxymethylpyrimidine phosphate (HMP-P). The chain is HMP-PP phosphatase from Citrobacter koseri (strain ATCC BAA-895 / CDC 4225-83 / SGSC4696).